The primary structure comprises 453 residues: Ezy-1 protein (453 aa).

The first 28 residues, 1-28 (MQLSNSLRSARSAAASSGCALASRPVVA), serve as a signal peptide directing secretion. Disordered regions lie at residues 167–187 (SDGG…DADG), 272–307 (TGKA…SSGG), and 412–453 (SAGD…SPNM). Residues 279 to 300 (AEGDDGEGEEEGEAQDVGEDAV) are compositionally biased toward acidic residues. Positions 415–425 (DGHEPEPKRPE) are enriched in basic and acidic residues.

The polypeptide is Ezy-1 protein (Ezy-1) (Chlamydomonas reinhardtii (Chlamydomonas smithii)).